Here is a 434-residue protein sequence, read N- to C-terminus: Xylose isomerase (434 aa).

Catalysis depends on residues His-100 and Asp-103. Residues Glu-231, Glu-267, His-270, Asp-295, Asp-306, Asp-308, and Asp-338 each coordinate Mg(2+).

The protein belongs to the xylose isomerase family. In terms of assembly, homotetramer. The cofactor is Mg(2+).

It is found in the cytoplasm. It catalyses the reaction alpha-D-xylose = alpha-D-xylulofuranose. In Ruegeria pomeroyi (strain ATCC 700808 / DSM 15171 / DSS-3) (Silicibacter pomeroyi), this protein is Xylose isomerase.